We begin with the raw amino-acid sequence, 257 residues long: tRNA (guanine-N(1)-)-methyltransferase (257 aa).

Residues Gly-112 and 136 to 141 (LGDYVL) each bind S-adenosyl-L-methionine.

It belongs to the RNA methyltransferase TrmD family. As to quaternary structure, homodimer.

The protein resides in the cytoplasm. It catalyses the reaction guanosine(37) in tRNA + S-adenosyl-L-methionine = N(1)-methylguanosine(37) in tRNA + S-adenosyl-L-homocysteine + H(+). Its function is as follows. Specifically methylates guanosine-37 in various tRNAs. This is tRNA (guanine-N(1)-)-methyltransferase from Salinispora arenicola (strain CNS-205).